The chain runs to 62 residues: Large ribosomal subunit protein uL29 (62 aa).

This sequence belongs to the universal ribosomal protein uL29 family.

The protein is Large ribosomal subunit protein uL29 of Trichlorobacter lovleyi (strain ATCC BAA-1151 / DSM 17278 / SZ) (Geobacter lovleyi).